A 290-amino-acid chain; its full sequence is Porphobilinogen deaminase (290 aa).

Cys-237 carries the post-translational modification S-(dipyrrolylmethanemethyl)cysteine.

The protein belongs to the HMBS family. Monomer. Dipyrromethane serves as cofactor.

The enzyme catalyses 4 porphobilinogen + H2O = hydroxymethylbilane + 4 NH4(+). The protein operates within porphyrin-containing compound metabolism; protoporphyrin-IX biosynthesis; coproporphyrinogen-III from 5-aminolevulinate: step 2/4. Tetrapolymerization of the monopyrrole PBG into the hydroxymethylbilane pre-uroporphyrinogen in several discrete steps. The polypeptide is Porphobilinogen deaminase (Clostridium botulinum (strain Kyoto / Type A2)).